Consider the following 859-residue polypeptide: Bifunctional heparan sulfate N-deacetylase/N-sulfotransferase 1 (859 aa).

Over 1-13 (MIITPYLNPRLVK) the chain is Cytoplasmic. Residues 14–34 (PLKWLAIIILLYFLYFSLFSI) traverse the membrane as a helical; Signal-anchor for type II membrane protein segment. The interval 34–575 (INKKPGKPRK…PRHQAILPPS (542 aa)) is heparan sulfate N-deacetylase 1. Residues 35–859 (NKKPGKPRKP…WLEEAVRIRV (825 aa)) are Lumenal-facing. Residues N50, N74, N210, N262, N378, and N429 are each glycosylated (N-linked (GlcNAc...) asparagine). A heparan sulfate N-sulfotransferase 1 region spans residues 576 to 859 (MSCSKKSLPD…WLEEAVRIRV (284 aa)). K593 serves as the catalytic For sulfotransferase activity. Position 593–597 (593–597 (KTGST)) interacts with 3'-phosphoadenylyl sulfate. 2 N-linked (GlcNAc...) asparagine glycosylation sites follow: N608 and N643. S687 serves as a coordination point for 3'-phosphoadenylyl sulfate. N-linked (GlcNAc...) asparagine glycosylation is present at N715. C796 and C805 are disulfide-bonded. 810-814 (KGRKY) contributes to the 3'-phosphoadenylyl sulfate binding site.

The protein belongs to the sulfotransferase 1 family. NDST subfamily. Monomer.

It is found in the golgi apparatus membrane. The enzyme catalyses alpha-D-glucosaminyl-[heparan sulfate](n) + 3'-phosphoadenylyl sulfate = N-sulfo-alpha-D-glucosaminyl-[heparan sulfate](n) + adenosine 3',5'-bisphosphate + 2 H(+). The protein operates within glycan metabolism; heparan sulfate biosynthesis. Its pathway is glycan metabolism; heparin biosynthesis. In terms of biological role, essential bifunctional enzyme that catalyzes both the N-deacetylation and the N-sulfation of glucosamine (GlcNAc) of the glycosaminoglycan in heparan sulfate. Modifies the GlcNAc-GlcA disaccharide repeating sugar backbone to make N-sulfated heparosan, a prerequisite substrate for later modifications in heparin biosynthesis. In Caenorhabditis briggsae, this protein is Bifunctional heparan sulfate N-deacetylase/N-sulfotransferase 1 (hst-1).